The sequence spans 343 residues: CMP-N-acetylneuraminate-beta-galactosamide-alpha-2,3-sialyltransferase 1 (343 aa).

At 1 to 11 (MAPMRKKSTLK) the chain is on the cytoplasmic side. Residues 12–27 (LLTLLVLFIFLTSFFL) traverse the membrane as a helical; Signal-anchor for type II membrane protein segment. The N-linked (GlcNAc...) asparagine glycan is linked to N28. At 28–343 (NYSHTVVTTA…INKIRIFKGR (316 aa)) the chain is on the lumenal side. Disulfide bonds link C62/C67, C64/C142, and C145/C284. An N-linked (GlcNAc...) asparagine glycan is attached at N82. Q108 contributes to the substrate binding site. Residue N117 is glycosylated (N-linked (GlcNAc...) asparagine). 8 residues coordinate substrate: N150, N173, Y233, Y269, G273, G293, H302, and H319. N326 carries N-linked (GlcNAc...) asparagine glycosylation.

It belongs to the glycosyltransferase 29 family. The soluble form derives from the membrane form by proteolytic processing. As to expression, the long isoform is abundant in salivary gland, liver, lung, and colon mucosa. Both long and short forms are detected in submaxillary salivary glands.

The protein localises to the golgi apparatus. It is found in the golgi stack membrane. The protein resides in the trans-Golgi network membrane. Its subcellular location is the secreted. It carries out the reaction a beta-D-galactosyl-(1-&gt;3)-N-acetyl-alpha-D-galactosaminyl derivative + CMP-N-acetyl-beta-neuraminate = an N-acetyl-alpha-neuraminyl-(2-&gt;3)-beta-D-galactosyl-(1-&gt;3)-N-acetyl-alpha-D-galactosaminyl derivative + CMP + H(+). The enzyme catalyses a ganglioside GM1 (d18:1(4E)) + CMP-N-acetyl-beta-neuraminate = a ganglioside GD1a (d18:1(4E)) + CMP + H(+). The catalysed reaction is ganglioside GM1 (d18:1(4E)/18:0) + CMP-N-acetyl-beta-neuraminate = ganglioside GD1a (18:1(4E)/18:0) + CMP + H(+). It catalyses the reaction a ganglioside GA1 (d18:1(4E)) + CMP-N-acetyl-beta-neuraminate = a ganglioside GM1b (d18:1(4E)) + CMP + H(+). It carries out the reaction a ganglioside GD1b + CMP-N-acetyl-beta-neuraminate = a ganglioside GT1b + CMP + H(+). The enzyme catalyses a 3-O-[beta-D-galactosyl-(1-&gt;3)-N-acetyl-alpha-D-galactosaminyl]-L-threonyl-[protein] + CMP-N-acetyl-beta-neuraminate = a 3-O-[N-acetyl-alpha-neuraminyl-(2-&gt;3)-beta-D-galactosyl-(1-&gt;3)-N-acetyl-alpha-D-galactosaminyl]-L-threonyl-[protein] + CMP + H(+). The catalysed reaction is a 3-O-[beta-D-galactosyl-(1-&gt;3)-N-acetyl-alpha-D-galactosaminyl]-L-seryl-[protein] + CMP-N-acetyl-beta-neuraminate = 3-O-[N-acetyl-alpha-neuraminyl-(2-&gt;3)-beta-D-galactosyl-(1-&gt;3)-N-acetyl-alpha-D-galactosaminyl]-L-seryl-[protein] + CMP + H(+). The protein operates within protein modification; protein glycosylation. It functions in the pathway glycolipid biosynthesis. A beta-galactoside alpha2-&gt;3 sialyltransferase involved in terminal sialylation of glycoproteins and glycolipids. Catalyzes the transfer of sialic acid (N-acetyl-neuraminic acid; Neu5Ac) from the nucleotide sugar donor CMP-Neu5Ac onto acceptor Galbeta-(1-&gt;3)-GalNAc-terminated glycoconjugates through an alpha2-3 linkage. Adds sialic acid to the core 1 O-glycan, Galbeta-(1-&gt;3)-GalNAc-O-Ser/Thr, which is a major structure of mucin-type O-glycans. As part of a homeostatic mechanism that regulates CD8-positive T cell numbers, sialylates core 1 O-glycans of T cell glycoproteins, SPN/CD43 and PTPRC/CD45. Prevents premature apoptosis of thymic CD8-positive T cells prior to peripheral emigration, whereas in the secondary lymphoid organs controls the survival of CD8-positive memory T cells generated following a successful immune response. Transfers sialic acid to asialofetuin, presumably onto Galbeta-(1-&gt;3)-GalNAc-O-Ser. Sialylates GM1a, GA1 and GD1b gangliosides to form GD1a, GM1b and GT1b, respectively. The polypeptide is CMP-N-acetylneuraminate-beta-galactosamide-alpha-2,3-sialyltransferase 1 (ST3GAL1) (Sus scrofa (Pig)).